A 151-amino-acid polypeptide reads, in one-letter code: MATLERKLVEMLKAPVEALGHELWGLEYIQAGKHSILRLYIDNEKGIFIEDCAETSRQVSAVMDVEDPISTEYTLEVSSPGVDRPLFTAEQYQLYIGETVKVQVTMPVAGSRNLKGTVIGIEGQMLTLSVDGNELIIALDNIRKGNLIAKF.

Belongs to the RimP family.

It localises to the cytoplasm. Required for maturation of 30S ribosomal subunits. The sequence is that of Ribosome maturation factor RimP from Shewanella piezotolerans (strain WP3 / JCM 13877).